Here is a 299-residue protein sequence, read N- to C-terminus: Protein FAM228A (299 aa).

The disordered stretch occupies residues 135-201; the sequence is AKGTSYQHGR…GRNRYKGASS (67 aa). Over residues 146–159 the composition is skewed to basic and acidic residues; sequence KTHDTQKEAKETEK. Ser-264 bears the Phosphoserine mark.

It belongs to the FAM228 family.

The polypeptide is Protein FAM228A (Fam228a) (Mus musculus (Mouse)).